The sequence spans 247 residues: V-type proton ATPase subunit D (247 aa).

It belongs to the V-ATPase D subunit family. V-ATPase is a heteromultimeric enzyme made up of two complexes: the ATP-hydrolytic V1 complex and the proton translocation V0 complex. The V1 complex consists of three catalytic AB heterodimers that form a heterohexamer, three peripheral stalks each consisting of EG heterodimers, one central rotor including subunits D and F, and the regulatory subunits C and H. The proton translocation complex V0 consists of the proton transport subunit a, a ring of proteolipid subunits c9c'', rotary subunit d, subunits e and f, and the accessory subunits ATP6AP1/Ac45 and ATP6AP2/PRR. Interacts with SNX10.

Its subcellular location is the membrane. It localises to the cytoplasmic vesicle. The protein resides in the clathrin-coated vesicle membrane. It is found in the cytoplasm. The protein localises to the cytoskeleton. Its subcellular location is the microtubule organizing center. It localises to the centrosome. The protein resides in the cell projection. It is found in the cilium. Its function is as follows. Subunit of the V1 complex of vacuolar(H+)-ATPase (V-ATPase), a multisubunit enzyme composed of a peripheral complex (V1) that hydrolyzes ATP and a membrane integral complex (V0) that translocates protons. V-ATPase is responsible for acidifying and maintaining the pH of intracellular compartments and in some cell types, is targeted to the plasma membrane, where it is responsible for acidifying the extracellular environment. May play a role in cilium biogenesis through regulation of the transport and the localization of proteins to the cilium. The polypeptide is V-type proton ATPase subunit D (ATP6V1D) (Oryctolagus cuniculus (Rabbit)).